We begin with the raw amino-acid sequence, 540 residues long: Homoserine O-acetyltransferase (540 aa).

In terms of domain architecture, AB hydrolase-1 spans 66–404 (NVILICHALT…QHGHDAFLLE (339 aa)). Residue serine 171 is the Nucleophile of the active site. Arginine 240 is a binding site for substrate. Residues 262–284 (QDTDKSGIKGTTGTEGKNSSEIS) are disordered. Catalysis depends on residues aspartate 365 and histidine 398. Residue aspartate 399 coordinates substrate. CBS domains lie at 425–484 (MNRN…ELDE) and 486–540 (ITRD…GKYD).

Belongs to the AB hydrolase superfamily. MetX family. As to quaternary structure, homodimer.

Its subcellular location is the cytoplasm. The enzyme catalyses L-homoserine + acetyl-CoA = O-acetyl-L-homoserine + CoA. It participates in amino-acid biosynthesis; L-methionine biosynthesis via de novo pathway; O-acetyl-L-homoserine from L-homoserine: step 1/1. Functionally, transfers an acetyl group from acetyl-CoA to L-homoserine, forming acetyl-L-homoserine. In vitro, can also use propionyl-CoA or butiryl-CoA as acyl donor. The protein is Homoserine O-acetyltransferase of Methanosarcina acetivorans (strain ATCC 35395 / DSM 2834 / JCM 12185 / C2A).